A 741-amino-acid chain; its full sequence is Phage T7 exclusion protein (741 aa).

The KAP NTPase domain occupies 27–334; it reads FGNIAENISR…NSLIFLYPGM (308 aa).

In terms of biological role, responsible for the exclusion of phage T7 by plasmid F. Growth of bacteriophage T7 is inhibited in cells of E.coli that carries the plasmid F. The chain is Phage T7 exclusion protein (pifA) from Escherichia coli (strain K12).